The sequence spans 88 residues: uncharacterized protein (88 aa).

The interval 1-88 (MPHLPELSKQ…IRRGNPSGVA (88 aa)) is disordered. Residues 21–65 (YRAKGEDLENSHHNNESRLAEGVHYDRNKAPALQEREKASTEKVN) are compositionally biased toward basic and acidic residues.

Involved in osmoadaptation. This is an uncharacterized protein from Emericella nidulans (strain FGSC A4 / ATCC 38163 / CBS 112.46 / NRRL 194 / M139) (Aspergillus nidulans).